Consider the following 686-residue polypeptide: tRNA wybutosine-synthesizing protein 4 (686 aa).

Residues 1–22 (MGPRSRQRRTGTVQSTNDSSSL) form a disordered region. Residues 10-22 (TGTVQSTNDSSSL) are compositionally biased toward polar residues. Residues Arg-59, Gly-89, Asp-114, 161–162 (DL), and Glu-188 contribute to the S-adenosyl-L-methionine site.

The protein belongs to the methyltransferase superfamily. LCMT family. As to quaternary structure, interacts with RNF144B/IBRDC2.

It catalyses the reaction 7-[(3S)-3-amino-3-carboxypropyl]wyosine(37) in tRNA(Phe) + S-adenosyl-L-methionine = 7-[(3S)-(3-amino-3-methoxycarbonyl)propyl]wyosine(37) in tRNA(Phe) + S-adenosyl-L-homocysteine. It carries out the reaction 7-[(3S)-(3-amino-3-methoxycarbonyl)propyl]wyosine(37) in tRNA(Phe) + S-adenosyl-L-methionine + CO2 = wybutosine(37) in tRNA(Phe) + S-adenosyl-L-homocysteine + 2 H(+). It functions in the pathway tRNA modification; wybutosine-tRNA(Phe) biosynthesis. Probable S-adenosyl-L-methionine-dependent methyltransferase that acts as a component of the wybutosine biosynthesis pathway. Wybutosine is a hyper modified guanosine with a tricyclic base found at the 3'-position adjacent to the anticodon of eukaryotic phenylalanine tRNA. May methylate the carboxyl group of leucine residues to form alpha-leucine ester residues. This chain is tRNA wybutosine-synthesizing protein 4 (Lcmt2), found in Rattus norvegicus (Rat).